Consider the following 67-residue polypeptide: MPKLKTKSGVKKRFKFTASGKVKHGVAGKRHRLISHNSKYIRTNRGTSVLSEADAAHVRLWAPYGLK.

Belongs to the bacterial ribosomal protein bL35 family.

In Sphingopyxis alaskensis (strain DSM 13593 / LMG 18877 / RB2256) (Sphingomonas alaskensis), this protein is Large ribosomal subunit protein bL35.